Reading from the N-terminus, the 260-residue chain is Circadian clock-controlled protein daywake (260 aa).

A signal peptide spans 1 to 25 (MQLTGASMFLVWVGLLSWVSCRVDA).

This sequence belongs to the TO family. Epidermis of newly eclosed adults.

Functionally, component of the circadian clock or downstream effector of clock function. Required for suppressing daytime sleep (siesta) under ambient environmental temperatures. Part of a heat avoidance mechanism that modulates daytime sleep behavior under different environmental temperatures to minimize the risk of heat exposure. Under cooler ambient temperatures, suppresses daytime sleep (siesta) and thus allows for longer periods of daytime activity. This is Circadian clock-controlled protein daywake from Drosophila melanogaster (Fruit fly).